The sequence spans 1668 residues: Zinc finger CCCH domain-containing protein 13 (1668 aa).

Disordered stretches follow at residues 1-38 (MSKIRRKVTVENTKTISDSTSRRPSVFERLGPSTGSTA) and 56-157 (TCRF…GDIN). Residues 10–23 (VENTKTISDSTSRR) show a composition bias toward polar residues. Residues 36–64 (STAETQCRNWLKTGNCLYGNTCRFVHGPS) form a C3H1-type zinc finger. Residues S64 and S77 each carry the phosphoserine modification. The span at 76 to 136 (RSPERPTGDL…IKITKERTPE (61 aa)) shows a compositional bias: basic and acidic residues. Residues K179 and K194 each participate in a glycyl lysine isopeptide (Lys-Gly) (interchain with G-Cter in SUMO2) cross-link. Disordered regions lie at residues 190 to 1112 (EIII…TATA) and 1125 to 1466 (AAAT…PISD). A phosphoserine mark is found at S198, S207, S209, and S211. The span at 204–213 (SKLSPSPSLR) shows a compositional bias: low complexity. Positions 214-224 (KSSKSPKRKSS) are enriched in basic residues. Phosphothreonine is present on T237. A phosphoserine mark is found at S238 and S242. Residues 239–254 (AVSSPLLDQQRNSKTN) show a composition bias toward polar residues. A Phosphothreonine modification is found at T263. Position 265 is a phosphoserine (S265). The span at 283–315 (KYKVKDRIEEKTRDGKDRGRDFERQREKRDKPR) shows a compositional bias: basic and acidic residues. Residues S316, S318, S325, and S328 each carry the phosphoserine modification. The span at 323 to 346 (HHSPISSRHHSSSSQSGSSIQRHS) shows a compositional bias: low complexity. A phosphothreonine mark is found at T354 and T364. Residues S370, S372, and S381 each carry the phosphoserine modification. The span at 370-382 (SASPYPSHSLSSP) shows a compositional bias: low complexity. Basic and acidic residues-rich tracts occupy residues 394–434 (PMRE…REER) and 442–575 (SSRD…EKGS). The span at 584-593 (DSHSSNSNYH) shows a compositional bias: low complexity. A compositionally biased stretch (basic and acidic residues) spans 594–640 (DSWETRSSYPERDRYPERDNRDQARDSSFERRHGERDRRDNRERDQR). Residue S643 is modified to Phosphoserine. Residues 645–789 (IRHQGRNDEL…RDKERERQRD (145 aa)) adopt a coiled-coil conformation. The segment covering 649-821 (GRNDELERDE…NPRDGHDERK (173 aa)) has biased composition (basic and acidic residues). Phosphoserine is present on residues S831, S833, S837, S845, S848, S853, S873, S875, and S877. Over residues 881 to 957 (LTEDRQGRWK…TSDRAHDENK (77 aa)) the composition is skewed to basic and acidic residues. Phosphothreonine is present on T882. S943 carries the post-translational modification Phosphoserine. A compositionally biased stretch (basic residues) spans 958 to 969 (KKAKIQKKPIKK). Positions 970–981 (KKEDDVGIERGN) are enriched in basic and acidic residues. Phosphoserine is present on residues S986, S993, S1010, S1014, and S1017. The span at 996 to 1010 (KGQKKKSIEKKRKKS) shows a compositional bias: basic residues. Phosphothreonine is present on T1033. The span at 1073–1083 (PDRTEVTEAEH) shows a compositional bias: basic and acidic residues. Composition is skewed to low complexity over residues 1084–1100 (TATATTPGSTPSPLSSL) and 1125–1153 (AAATSFSTSAITISTSATPTNTTNNTFAN). The segment covering 1163 to 1188 (TRVEKVETPHVTIEDAQHRKPMDQKR) has biased composition (basic and acidic residues). T1170 carries the post-translational modification Phosphothreonine. A phosphoserine mark is found at S1191, S1194, S1208, and S1210. A compositionally biased stretch (basic and acidic residues) spans 1213-1223 (SAHRSGDDQSG). S1230 is subject to Phosphoserine. Composition is skewed to basic and acidic residues over residues 1231–1286 (GSRD…DRQV) and 1294–1379 (DSRD…DRTF). Residues 1300 to 1366 (QERDRYEHDR…RERERLISDS (67 aa)) are a coiled coil. A phosphoserine mark is found at S1364, S1366, S1382, S1386, S1406, S1409, S1438, L1453, G1456, S1465, and D1466. Basic and acidic residues-rich tracts occupy residues 1386-1421 (SVKRCEAKLEGEHERDLESTSRDSLALDKERMDKDL) and 1429-1438 (ETNKSERTES).

This sequence belongs to the ZC3H13 family. As to quaternary structure, component of the WMM complex, a N6-methyltransferase complex composed of a catalytic subcomplex, named MAC, and of an associated subcomplex, named MACOM. The MAC subcomplex is composed of METTL3 and METTL14. The MACOM subcomplex is composed of WTAP, ZC3H13, CBLL1/HAKAI, VIRMA, and, in some cases of RBM15 (RBM15 or RBM15B). Also a component of a MACOM-like complex, named WTAP complex, composed of WTAP, ZC3H13, CBLL1/HAKAI, VIRMA, RBM15, BCLAF1 and THRAP3.

The protein resides in the nucleus speckle. The protein localises to the nucleus. Its subcellular location is the nucleoplasm. Associated component of the WMM complex, a complex that mediates N6-methyladenosine (m6A) methylation of RNAs, a modification that plays a role in the efficiency of mRNA splicing and RNA processing. Acts as a key regulator of m6A methylation by promoting m6A methylation of mRNAs at the 3'-UTR. Controls embryonic stem cells (ESCs) pluripotency via its role in m6A methylation. In the WMM complex, anchors component of the MACOM subcomplex in the nucleus. Also required for bridging WTAP to the RNA-binding component RBM15 (RBM15 or RBM15B). This chain is Zinc finger CCCH domain-containing protein 13, found in Homo sapiens (Human).